Reading from the N-terminus, the 221-residue chain is ATP phosphoribosyltransferase (221 aa).

The protein belongs to the ATP phosphoribosyltransferase family. Short subfamily. Heteromultimer composed of HisG and HisZ subunits.

It localises to the cytoplasm. It catalyses the reaction 1-(5-phospho-beta-D-ribosyl)-ATP + diphosphate = 5-phospho-alpha-D-ribose 1-diphosphate + ATP. The protein operates within amino-acid biosynthesis; L-histidine biosynthesis; L-histidine from 5-phospho-alpha-D-ribose 1-diphosphate: step 1/9. Catalyzes the condensation of ATP and 5-phosphoribose 1-diphosphate to form N'-(5'-phosphoribosyl)-ATP (PR-ATP). Has a crucial role in the pathway because the rate of histidine biosynthesis seems to be controlled primarily by regulation of HisG enzymatic activity. The sequence is that of ATP phosphoribosyltransferase from Neisseria gonorrhoeae (strain ATCC 700825 / FA 1090).